Here is a 619-residue protein sequence, read N- to C-terminus: Eukaryotic translation initiation factor 3 subunit D (619 aa).

Positions 99–160 (QKQPHQRGRF…KWGARPPPKI (62 aa)) are disordered. Basic residues predominate over residues 100–121 (KQPHQRGRFRGNLRNQRGRGRG). An RNA gate region spans residues 288–302 (EFDLLTVNETAIEPP). Residues 588–619 (TPAATETVATATTEATTPTTATKTTAPAAAQK) are disordered.

The protein belongs to the eIF-3 subunit D family. In terms of assembly, component of the eukaryotic translation initiation factor 3 (eIF-3) complex.

Its subcellular location is the cytoplasm. MRNA cap-binding component of the eukaryotic translation initiation factor 3 (eIF-3) complex, which is involved in protein synthesis of a specialized repertoire of mRNAs and, together with other initiation factors, stimulates binding of mRNA and methionyl-tRNAi to the 40S ribosome. The eIF-3 complex specifically targets and initiates translation of a subset of mRNAs involved in cell proliferation. In the eIF-3 complex, eif3d specifically recognizes and binds the 7-methylguanosine cap of a subset of mRNAs. This chain is Eukaryotic translation initiation factor 3 subunit D, found in Aedes aegypti (Yellowfever mosquito).